Consider the following 1134-residue polypeptide: Ankyrin repeat and SAM domain-containing protein 1A (1134 aa).

Position 2 is an N-acetylglycine (Gly-2). Residues 33-55 are compositionally biased toward gly residues; the sequence is GGGGGGGSGGGGGGSGGGGGGLG. The segment at 33–57 is disordered; sequence GGGGGGGSGGGGGGSGGGGGGLGSS. 6 ANK repeats span residues 79–108, 112–141, 148–177, 181–210, 214–243, and 246–275; these read TGYTPLHHAALNGHKDVVEVLLRNDALTNV, KGCYPLHLAAWKGDAQIVRLLIHQGPSHTR, DNETALHCAAQYGHTEVVKVLLEELTDPTM, KFETPLDLAALYGRLEVVKMLLNAHPNLLS, KKHTPLHLAARNGHKAVVQVLLDAGMDSNY, and EMGSALHEAALFGKTDVVQILLAAGTDVNI. Residues 305-317 are compositionally biased toward basic and acidic residues; sequence HMTGKRSTKEVDK. Disordered stretches follow at residues 305–338, 375–422, and 469–498; these read HMTGKRSTKEVDKTPPPQPPLISSMDSISQKSQG, SMAS…EEDH, and VDGKTKDHRRSSSSRSQDSAEGQDGQVPEQ. The residue at position 318 (Thr-318) is a Phosphothreonine. Over residues 328-337 the composition is skewed to polar residues; it reads SMDSISQKSQ. A compositionally biased stretch (basic and acidic residues) spans 382–392; the sequence is SDQDSTNKEAE. Phosphoserine is present on Ser-507. Residues 569–650 form a disordered region; the sequence is LTGLPTTNSR…MGSRSESLSN (82 aa). A compositionally biased stretch (polar residues) spans 572 to 588; that stretch reads LPTTNSRSHPETLTHTA. The segment covering 613–628 has biased composition (basic and acidic residues); sequence PKAELKLSRSLSKSDS. Phosphoserine is present on residues Ser-620, Ser-622, Ser-624, Ser-626, Ser-628, Ser-647, Ser-661, Ser-663, Ser-666, and Ser-677. A compositionally biased stretch (polar residues) spans 633–650; that stretch reads CSPTEDATMGSRSESLSN. SAM domains are found at residues 696-762 and 770-837; these read TLEQ…LPKV and NSPP…YEEP. A compositionally biased stretch (polar residues) spans 856-868; the sequence is TSSPLSQNDSCTG. Disordered regions lie at residues 856–896 and 1079–1134; these read TSSP…APSR and AEMI…LSTN. Ser-887 carries the post-translational modification Phosphoserine. Positions 936 to 1091 constitute a PID domain; that stretch reads IFESCGYEAN…IETKSSKPVP (156 aa). Residues 1123 to 1134 show a composition bias toward basic and acidic residues; it reads PKPDSKRSLSTN.

As to quaternary structure, interacts (via SAM domain) with EPHA2 (via SAM domain). Interacts with EPHA8; EPHA8 kinase activity-independent but stimulated by EPHA8 ubiquitination. Interacts (via SAM domain) with EPHA6 (via SAM domain). Post-translationally, phosphorylated on tyrosine residues in response to EGF and PDGF. Widely expressed (at protein level).

It is found in the cytoplasm. The protein resides in the cell projection. Functionally, regulator of different signaling pathways. Regulates EPHA8 receptor tyrosine kinase signaling to control cell migration and neurite retraction. This is Ankyrin repeat and SAM domain-containing protein 1A (ANKS1A) from Homo sapiens (Human).